Reading from the N-terminus, the 512-residue chain is Cytochrome P450 monooxygenase gliC (512 aa).

The first 19 residues, 1–19, serve as a signal peptide directing secretion; sequence MAFTLTILVPCMVLALVAA. N-linked (GlcNAc...) asparagine glycosylation is found at asparagine 118, asparagine 421, and asparagine 434. Heme is bound at residue cysteine 452.

It belongs to the cytochrome P450 family. Heme is required as a cofactor.

It functions in the pathway mycotoxin biosynthesis. Cytochrome P450 monooxygenase; part of the gene cluster that mediates the biosynthesis of gliotoxin, a member of the epipolythiodioxopiperazine (ETP) class of toxins characterized by a disulfide bridged cyclic dipeptide. The first step in gliotoxin biosynthesis is the condensation of serine and phenylalanine to form the cyclo-L-phenylalanyl-L-serine diketopiperazine (DKP) by the NRPS gliP. GliP is also able to produce the DKP cyclo-L-tryptophanyl-L-serine, suggesting that the substrate specificity of the first adenylation (A) domain in gliP is sufficiently relaxed to accommodate both L-Phe and L-Trp. The cytochrome P450 monooxygenase gliC has been shown to catalyze the subsequent hydroxylation of the alpha-carbon of L-Phe in cyclo-L-phenylalanyl-L-serine whereas the second cytochrome P450 enzyme, gliF, is presumably involved in the modification of the DKP side chain. The glutathione S-transferase (GST) gliG then forms a bis-glutathionylated biosynthetic intermediate which is responsible for the sulfurization of gliotoxin. This bis-glutathionylated intermediate is subsequently processed by the gamma-glutamyl cyclotransferase gliK to remove both gamma-glutamyl moieties. Subsequent processing via gliI yields a biosynthetic intermediate, which is N-methylated via the N-methyltransferase gliN, before the gliotoxin oxidoreductase gliT-mediated disulfide bridge closure. GliN-mediated amide methylation confers stability to ETP, damping the spontaneous formation of tri- and tetrasulfides. Intracellular dithiol gliotoxin oxidized by gliT is subsequently effluxed by gliA. Gliotoxin contributes to pathogenesis during invasive aspergillosis. In macrophages and neutrophils, gliotoxin showed inhibition of various different cell functions including cytokine production, antigen presentation, phagocytosis, and production of reactive oxygen species. The polypeptide is Cytochrome P450 monooxygenase gliC (Aspergillus fumigatus (strain ATCC MYA-4609 / CBS 101355 / FGSC A1100 / Af293) (Neosartorya fumigata)).